Reading from the N-terminus, the 216-residue chain is Pyridoxine/pyridoxamine 5'-phosphate oxidase (216 aa).

FMN is bound by residues 63 to 68 (RMVLMK), 78 to 79 (YS), lysine 85, and glutamine 107. Residue lysine 68 participates in substrate binding. Substrate contacts are provided by tyrosine 125 and arginine 129. Residues 142–143 (QS) and tryptophan 187 each bind FMN. Position 193-195 (193-195 (RLH)) interacts with substrate. Arginine 197 contacts FMN.

The protein belongs to the pyridoxamine 5'-phosphate oxidase family. Homodimer. It depends on FMN as a cofactor.

The enzyme catalyses pyridoxamine 5'-phosphate + O2 + H2O = pyridoxal 5'-phosphate + H2O2 + NH4(+). It carries out the reaction pyridoxine 5'-phosphate + O2 = pyridoxal 5'-phosphate + H2O2. The protein operates within cofactor metabolism; pyridoxal 5'-phosphate salvage; pyridoxal 5'-phosphate from pyridoxamine 5'-phosphate: step 1/1. It functions in the pathway cofactor metabolism; pyridoxal 5'-phosphate salvage; pyridoxal 5'-phosphate from pyridoxine 5'-phosphate: step 1/1. Functionally, catalyzes the oxidation of either pyridoxine 5'-phosphate (PNP) or pyridoxamine 5'-phosphate (PMP) into pyridoxal 5'-phosphate (PLP). The protein is Pyridoxine/pyridoxamine 5'-phosphate oxidase of Bradyrhizobium sp. (strain BTAi1 / ATCC BAA-1182).